A 55-amino-acid chain; its full sequence is Histone H1 (55 aa).

Residues 1-15 (MAEVAPAPAAAAPAK) are compositionally biased toward low complexity. A disordered region spans residues 1-28 (MAEVAPAPAAAAPAKAPKKKAAAKPKKA). N-acetylalanine is present on alanine 2. The span at 16 to 27 (APKKKAAAKPKK) shows a compositional bias: basic residues. The H15 domain maps to 28-55 (AGPSVGELIVKAVSASKERSGVSLAALK).

Belongs to the histone H1/H5 family.

It localises to the nucleus. It is found in the chromosome. The protein resides in the secreted. Its function is as follows. Histones H1 are necessary for the condensation of nucleosome chains into higher-order structures. In terms of biological role, SAMP H1 has antibacterial activity against Gram-negative bacteria E.coli, A.salmonicida subsp salmonicida, V.anguillarum and S.typhimurium and Gram-positive bacteria B.subtilis and L.ivanovii. The protein is Histone H1 of Salmo salar (Atlantic salmon).